A 268-amino-acid chain; its full sequence is 4-hydroxy-tetrahydrodipicolinate reductase (268 aa).

NAD(+) is bound by residues 9 to 14 (GAAGRM), 99 to 101 (GTT), and 123 to 126 (ASNF). His156 (proton donor/acceptor) is an active-site residue. His157 serves as a coordination point for (S)-2,3,4,5-tetrahydrodipicolinate. Lys160 serves as the catalytic Proton donor. Residue 166 to 167 (GT) coordinates (S)-2,3,4,5-tetrahydrodipicolinate.

It belongs to the DapB family.

The protein resides in the cytoplasm. The catalysed reaction is (S)-2,3,4,5-tetrahydrodipicolinate + NAD(+) + H2O = (2S,4S)-4-hydroxy-2,3,4,5-tetrahydrodipicolinate + NADH + H(+). It catalyses the reaction (S)-2,3,4,5-tetrahydrodipicolinate + NADP(+) + H2O = (2S,4S)-4-hydroxy-2,3,4,5-tetrahydrodipicolinate + NADPH + H(+). The protein operates within amino-acid biosynthesis; L-lysine biosynthesis via DAP pathway; (S)-tetrahydrodipicolinate from L-aspartate: step 4/4. Catalyzes the conversion of 4-hydroxy-tetrahydrodipicolinate (HTPA) to tetrahydrodipicolinate. The sequence is that of 4-hydroxy-tetrahydrodipicolinate reductase from Saccharophagus degradans (strain 2-40 / ATCC 43961 / DSM 17024).